The primary structure comprises 366 residues: tRNA-queuosine alpha-mannosyltransferase (366 aa).

Belongs to the glycosyltransferase group 1 family. Glycosyltransferase 4 subfamily.

Its subcellular location is the cytoplasm. It localises to the nucleus. The enzyme catalyses queuosine(34) in tRNA(Asp) + GDP-alpha-D-mannose = O-4''-alpha-D-mannosylqueuosine(34) in tRNA(Asp) + GDP + H(+). Functionally, glycosyltransferase that specifically catalyzes mannosylation of cytoplasmic tRNA(Asp) modified with queuosine at position 34 (queuosine(34)). Mannosylates the cyclopentene moiety of queuosine(34) in tRNA(Asp) to form mannosyl-queuosine(34). Mannosylation of queuosine(34) in tRNA(Asp) is required to slow-down elongation at cognate codons, GAC and GAU, thereby regulating protein translation. This is tRNA-queuosine alpha-mannosyltransferase (GTDC1) from Bos taurus (Bovine).